The primary structure comprises 366 residues: Isopentenyl-diphosphate delta-isomerase (366 aa).

6-7 (RK) contributes to the substrate binding site. FMN-binding positions include T63, 64–66 (GMT), S94, and N123. 94–96 (SQR) lines the substrate pocket. Residue Q158 participates in substrate binding. Residue E159 coordinates Mg(2+). FMN-binding positions include K191, S216, T221, 273–275 (GIR), and 294–295 (AN).

Belongs to the IPP isomerase type 2 family. As to quaternary structure, homooctamer. Dimer of tetramers. FMN serves as cofactor. NADPH is required as a cofactor. The cofactor is Mg(2+).

The protein resides in the cytoplasm. The enzyme catalyses isopentenyl diphosphate = dimethylallyl diphosphate. Involved in the biosynthesis of isoprenoids. Catalyzes the 1,3-allylic rearrangement of the homoallylic substrate isopentenyl (IPP) to its allylic isomer, dimethylallyl diphosphate (DMAPP). The protein is Isopentenyl-diphosphate delta-isomerase of Metallosphaera sedula (strain ATCC 51363 / DSM 5348 / JCM 9185 / NBRC 15509 / TH2).